Reading from the N-terminus, the 24-residue chain is Calreticulin (24 aa).

The protein belongs to the calreticulin family. In terms of assembly, monomer. Component of an EIF2 complex at least composed of CELF1/CUGBP1, CALR, CALR3, EIF2S1, EIF2S2, HSP90B1 and HSPA5. Interacts with PDIA3/ERp57 and SPACA9. Interacts with TRIM21. Interacts with NR3C1. Interacts with PPIB. Interacts (via P-domain) with PDIA5. Interacts with CLCC1. In terms of tissue distribution, pancreas.

The protein localises to the endoplasmic reticulum lumen. The protein resides in the cytoplasm. It is found in the cytosol. It localises to the cytolytic granule. Its subcellular location is the secreted. The protein localises to the extracellular space. The protein resides in the extracellular matrix. It is found in the cell surface. It localises to the sarcoplasmic reticulum lumen. Its subcellular location is the cytoplasmic vesicle. The protein localises to the secretory vesicle. The protein resides in the cortical granule. Its function is as follows. Calcium-binding chaperone that promotes folding, oligomeric assembly and quality control in the endoplasmic reticulum (ER) via the calreticulin/calnexin cycle. This lectin interacts transiently with almost all of the monoglucosylated glycoproteins that are synthesized in the ER. Interacts with the DNA-binding domain of NR3C1 and mediates its nuclear export. Involved in maternal gene expression regulation. May participate in oocyte maturation via the regulation of calcium homeostasis. Present in the cortical granules of non-activated oocytes, is exocytosed during the cortical reaction in response to oocyte activation and might participate in the block to polyspermy. The sequence is that of Calreticulin (CALR) from Canis lupus familiaris (Dog).